The primary structure comprises 435 residues: Legumain (435 aa).

Residues 1 to 17 form the signal peptide; sequence MTWRVAVLLSLVLGAGA. N-linked (GlcNAc...) asparagine glycosylation is present at asparagine 93. Histidine 150 is an active-site residue. Asparagine 169 carries an N-linked (GlcNAc...) asparagine glycan. The Nucleophile role is filled by cysteine 191. 3 N-linked (GlcNAc...) asparagine glycosylation sites follow: asparagine 215, asparagine 265, and asparagine 274. The propeptide occupies 326 to 435; it reads NMKESQVLVG…AMDKVCLSHY (110 aa). 2 disulfides stabilise this stretch: cysteine 380–cysteine 414 and cysteine 392–cysteine 431.

This sequence belongs to the peptidase C13 family. Homodimer before autocatalytic removal of the propeptide. Monomer after autocatalytic processing. May interact with integrins. Post-translationally, activated by autocatalytic processing at pH 4. Detected in kidney cortex (at protein level).

Its subcellular location is the lysosome. It carries out the reaction Hydrolysis of proteins and small molecule substrates at -Asn-|-Xaa- bonds.. Functionally, has a strict specificity for hydrolysis of asparaginyl bonds. Can also cleave aspartyl bonds slowly, especially under acidic conditions. Involved in the processing of proteins for MHC class II antigen presentation in the lysosomal/endosomal system. Also involved in MHC class I antigen presentation in cross-presenting dendritic cells by mediating cleavage and maturation of Perforin-2 (MPEG1), thereby promoting antigen translocation in the cytosol. Required for normal lysosomal protein degradation in renal proximal tubules. Required for normal degradation of internalized EGFR. Plays a role in the regulation of cell proliferation via its role in EGFR degradation. The polypeptide is Legumain (Lgmn) (Rattus norvegicus (Rat)).